The sequence spans 392 residues: Major outer membrane protein P.IA (392 aa).

The N-terminal stretch at 1 to 19 (MRKKLTALVLSALPLAAVA) is a signal peptide.

The protein belongs to the Gram-negative porin family. In terms of assembly, homotrimer.

Its subcellular location is the cell outer membrane. In terms of biological role, serves as a slightly cation selective porin. Major antigen on the gonococcal cell surface and it may have pathogenic properties in addition to its porin activity. In Neisseria meningitidis serogroup B (strain ATCC BAA-335 / MC58), this protein is Major outer membrane protein P.IA (porA).